Here is a 640-residue protein sequence, read N- to C-terminus: Preterminal protein (640 aa).

Residues 232–257 are disordered; that stretch reads PSQEGEGEERENPDRASSRPRPQETV. Residues 351 to 360 carry the Nuclear localization signal motif; the sequence is RLPVRRRRRR. Ser549 carries the post-translational modification O-(5'-phospho-DNA)-serine. Positions 614 to 640 are disordered; that stretch reads GADVPLPAMPPGPEPPLPPGARPRHRF. The span at 620 to 634 shows a compositional bias: pro residues; it reads PAMPPGPEPPLPPGA.

The protein belongs to the adenoviridae terminal protein family. In terms of assembly, heterodimer with the polymerase; this heterodimer binds to bp 9 to 18 of the genome. Interacts with host POU2F1; POU2F1 binds to the auxiliary sequences in the inverted terminal repeats and tethers the pTP-POL heterodimer to the origin DNA thereby participating in the assembly of the pre-initiation complex (POL-TP-DBP-NFIA-POU2F1). Preterminal protein is used to replicate viral genome, upon genomic encapsidation it is processed first into iTP and finally into TP by adenovirus protease.

It is found in the host nucleus matrix. Functionally, protein covalently bound to the viral DNA that acts as a primer for viral genomic replication by DNA strand displacement. Assembles on the viral origin of replication in an initiation complex with viral polymerase, DBP, host NFIA and host POU2F1/OCT1. During initiation, the polymerase covalently couples the first dCTP with Ser-580 of pTP. The terminal protein stimulates the template activity over 20 fold compared to protein-free templates. Neo-synthesized viral genomes are linked to two preterminal proteins, one for each 5' end. These new genomes are encapsidated in the nucleus, and during capsid maturation by viral protease, preterminal protein is first cleaved into intermediary (iTP), then into mature TP. May play a role in host nuclear matrix localization of genomic DNA. The sequence is that of Preterminal protein from Human adenovirus B serotype 7 (HAdV-7).